Here is a 338-residue protein sequence, read N- to C-terminus: Aspartate carbamoyltransferase catalytic subunit (338 aa).

2 residues coordinate carbamoyl phosphate: Arg-59 and Thr-60. L-aspartate is bound at residue Lys-87. Positions 109, 142, and 145 each coordinate carbamoyl phosphate. 2 residues coordinate L-aspartate: Arg-182 and Arg-253. Carbamoyl phosphate contacts are provided by Gly-294 and Pro-295.

This sequence belongs to the aspartate/ornithine carbamoyltransferase superfamily. ATCase family. In terms of assembly, heterododecamer (2C3:3R2) of six catalytic PyrB chains organized as two trimers (C3), and six regulatory PyrI chains organized as three dimers (R2).

It catalyses the reaction carbamoyl phosphate + L-aspartate = N-carbamoyl-L-aspartate + phosphate + H(+). Its pathway is pyrimidine metabolism; UMP biosynthesis via de novo pathway; (S)-dihydroorotate from bicarbonate: step 2/3. Functionally, catalyzes the condensation of carbamoyl phosphate and aspartate to form carbamoyl aspartate and inorganic phosphate, the committed step in the de novo pyrimidine nucleotide biosynthesis pathway. This Prochlorococcus marinus subsp. pastoris (strain CCMP1986 / NIES-2087 / MED4) protein is Aspartate carbamoyltransferase catalytic subunit.